Reading from the N-terminus, the 318-residue chain is Transcriptional regulator NovG (318 aa).

Residues 146-156 (VASLRSSSTAG) show a composition bias toward polar residues. The tract at residues 146–176 (VASLRSSSTAGTVGRRTGQDGRSRPNDGTDG) is disordered. Residues 162-176 (TGQDGRSRPNDGTDG) are compositionally biased toward basic and acidic residues.

It belongs to the ParB family.

Its function is as follows. Transcription regulator that specifically activates expression of genes involved in the novobiocin biosynthesis pathway. Binds 5'-GTTCRACTG(N)(11)CRGTYGAAC-3' DNA sequence. The protein is Transcriptional regulator NovG (novG) of Streptomyces niveus (Streptomyces spheroides).